The chain runs to 326 residues: Ficolin-1 (326 aa).

Residues 1–29 (MELSGATMARGLAVLLVLFLHIKNLPAQA) form the signal peptide. Positions 55-93 (GLPGAPGPKGEAGVIGERGERGLPGAPGKAGPVGPKGDR) constitute a Collagen-like domain. A disordered region spans residues 72–111 (RGERGLPGAPGKAGPVGPKGDRGEKGMRGEKGDAGQSQSC). A compositionally biased stretch (low complexity) spans 77–89 (LPGAPGKAGPVGP). A compositionally biased stretch (basic and acidic residues) spans 90–104 (KGDRGEKGMRGEKGD). Positions 109–326 (QSCATGPRNC…KVSEMKVRPA (218 aa)) constitute a Fibrinogen C-terminal domain. 2 disulfide bridges follow: Cys-111–Cys-139 and Cys-118–Cys-146. Residues 115–154 (PRNCKDLLDRGYFLSGWHTIYLPDCRPLTVLCDMDTDGGG) are a domain; contributes to trimerization. Positions 155–243 (WTVFQRRMDG…LVLGAFVGGS (89 aa)) are b domain; contributes to trimerization. Residues Asp-262, Asp-264, Ser-266, and Ser-268 each contribute to the Ca(2+) site. A disulfide bond links Cys-270 and Cys-283. An a carbohydrate-binding site is contributed by 282 to 284 (DCH). Asn-305 carries an N-linked (GlcNAc...) asparagine glycan. The segment at 317–326 (KVSEMKVRPA) is p domain.

The protein belongs to the ficolin lectin family. In terms of assembly, homotrimer. Interacts with elastin/ELN. Interacts (via Fibrinogen C-terminal domain) with FFAR2. Interacts with CRP; may regulate monocyte activation by FCN1. Peripheral blood leukocytes, monocytes and granulocytes. Also detected in spleen, lung, and thymus, may be due to the presence of tissue macrophages or trapped blood in these tissues. Not detected on lymphocytes.

The protein resides in the secreted. It localises to the cell membrane. Its function is as follows. Extracellular lectin functioning as a pattern-recognition receptor in innate immunity. Binds the sugar moieties of pathogen-associated molecular patterns (PAMPs) displayed on microbes and activates the lectin pathway of the complement system. May also activate monocytes through a G protein-coupled receptor, FFAR2, inducing the secretion of interleukin-8/IL-8. Binds preferentially to 9-O-acetylated 2-6-linked sialic acid derivatives and to various glycans containing sialic acid engaged in a 2-3 linkage. In Homo sapiens (Human), this protein is Ficolin-1 (FCN1).